The sequence spans 43 residues: Protein PsbN (43 aa).

A helical membrane pass occupies residues 5-27 (TLVAISISGLLVSFTGYALYTAF).

Belongs to the PsbN family.

The protein localises to the plastid. The protein resides in the chloroplast thylakoid membrane. May play a role in photosystem I and II biogenesis. The chain is Protein PsbN from Houttuynia cordata (Chameleon plant).